A 167-amino-acid polypeptide reads, in one-letter code: Ribosome maturation factor RimM (167 aa).

Positions 94-165 (ENEFYYSDII…KIIITPMEGL (72 aa)) constitute a PRC barrel domain.

The protein belongs to the RimM family. In terms of assembly, binds ribosomal protein uS19.

Its subcellular location is the cytoplasm. An accessory protein needed during the final step in the assembly of 30S ribosomal subunit, possibly for assembly of the head region. Essential for efficient processing of 16S rRNA. May be needed both before and after RbfA during the maturation of 16S rRNA. It has affinity for free ribosomal 30S subunits but not for 70S ribosomes. The sequence is that of Ribosome maturation factor RimM from Staphylococcus aureus (strain MRSA252).